The sequence spans 432 residues: Adenylosuccinate synthetase (432 aa).

Residues 12 to 18 and 40 to 42 each bind GTP; these read GDEGKGK and GHT. Asp-13 serves as the catalytic Proton acceptor. 2 residues coordinate Mg(2+): Asp-13 and Gly-40. IMP-binding positions include 13–16, 38–41, Thr-129, Arg-143, Gln-224, Thr-239, and Arg-303; these read DEGK and NAGH. Residue His-41 is the Proton donor of the active site. Substrate is bound at residue 299-305; it reads VTTGRRR. Residues Arg-305, 331 to 333, and 413 to 415 contribute to the GTP site; these read KLD and GVG.

Belongs to the adenylosuccinate synthetase family. Homodimer. It depends on Mg(2+) as a cofactor.

The protein localises to the cytoplasm. It catalyses the reaction IMP + L-aspartate + GTP = N(6)-(1,2-dicarboxyethyl)-AMP + GDP + phosphate + 2 H(+). Its pathway is purine metabolism; AMP biosynthesis via de novo pathway; AMP from IMP: step 1/2. Functionally, plays an important role in the de novo pathway of purine nucleotide biosynthesis. Catalyzes the first committed step in the biosynthesis of AMP from IMP. The protein is Adenylosuccinate synthetase of Mycobacterium avium (strain 104).